Reading from the N-terminus, the 513-residue chain is Alpha-amylase mde5 (513 aa).

The N-terminal stretch at 1-25 (MKHNEVFGWTLKVLSFLLVVIPANA) is a signal peptide. Cys52 and Cys60 are disulfide-bonded. Trp105 contacts substrate. Residue Asn143 coordinates Ca(2+). His144 provides a ligand contact to substrate. Asn162 is a glycosylation site (N-linked (GlcNAc...) asparagine). Cys171 and Cys184 form a disulfide bridge. Residues Glu182 and Asp195 each contribute to the Ca(2+) site. Substrate is bound at residue Arg224. Ca(2+) contacts are provided by Asp226, His230, and Glu250. Asp226 functions as the Nucleophile in the catalytic mechanism. 229-230 (KH) serves as a coordination point for substrate. Catalysis depends on Glu250, which acts as the Proton donor. Residue Gly254 coordinates substrate. A disulfide bridge connects residues Cys260 and Cys304. Asp318 is a binding site for substrate. Asn357 carries N-linked (GlcNAc...) asparagine glycosylation. Position 365 (Arg365) interacts with substrate. A disulfide bridge connects residues Cys454 and Cys488.

This sequence belongs to the glycosyl hydrolase 13 family. Requires Ca(2+) as cofactor.

The protein resides in the endoplasmic reticulum. The catalysed reaction is Endohydrolysis of (1-&gt;4)-alpha-D-glucosidic linkages in polysaccharides containing three or more (1-&gt;4)-alpha-linked D-glucose units.. The chain is Alpha-amylase mde5 (mde5) from Schizosaccharomyces pombe (strain 972 / ATCC 24843) (Fission yeast).